The sequence spans 335 residues: 3-ketodihydrosphingosine reductase TSC10 (335 aa).

NADPH is bound by residues G42, S44, S45, and G46. Positions 42–46 (GGSSG) match the GXSXG motif. Residue L47 coordinates NADP(+). 5 residues coordinate NADPH: R67, D68, K71, D95, and L96. An NADP(+)-binding site is contributed by D95. Y190, K194, and I223 together coordinate NADP(+). The Proton acceptor role is filled by Y190. K194 functions as the Lowers pKa of active site Tyr in the catalytic mechanism. The helical transmembrane segment at 288–308 (TNNFLLDTLWLIVSSVGVPIW) threads the bilayer.

The protein belongs to the short-chain dehydrogenases/reductases (SDR) family.

It localises to the endoplasmic reticulum membrane. The catalysed reaction is sphinganine + NADP(+) = 3-oxosphinganine + NADPH + H(+). It participates in lipid metabolism; sphingolipid metabolism. Its function is as follows. Catalyzes the reduction of 3'-oxosphinganine (3-ketodihydrosphingosine/KDS) to sphinganine (dihydrosphingosine/DHS), the second step of de novo sphingolipid biosynthesis. This Cryptococcus neoformans var. neoformans serotype D (strain B-3501A) (Filobasidiella neoformans) protein is 3-ketodihydrosphingosine reductase TSC10 (TSC10).